Here is a 308-residue protein sequence, read N- to C-terminus: Transaldolase (308 aa).

Lys125 functions as the Schiff-base intermediate with substrate in the catalytic mechanism.

The protein belongs to the transaldolase family. Type 1 subfamily. As to quaternary structure, homodimer.

Its subcellular location is the cytoplasm. It carries out the reaction D-sedoheptulose 7-phosphate + D-glyceraldehyde 3-phosphate = D-erythrose 4-phosphate + beta-D-fructose 6-phosphate. It functions in the pathway carbohydrate degradation; pentose phosphate pathway; D-glyceraldehyde 3-phosphate and beta-D-fructose 6-phosphate from D-ribose 5-phosphate and D-xylulose 5-phosphate (non-oxidative stage): step 2/3. Its function is as follows. Transaldolase is important for the balance of metabolites in the pentose-phosphate pathway. The chain is Transaldolase from Stutzerimonas stutzeri (strain A1501) (Pseudomonas stutzeri).